Here is a 95-residue protein sequence, read N- to C-terminus: Co-chaperonin GroES (95 aa).

This sequence belongs to the GroES chaperonin family. As to quaternary structure, heptamer of 7 subunits arranged in a ring. Interacts with the chaperonin GroEL.

It localises to the cytoplasm. Together with the chaperonin GroEL, plays an essential role in assisting protein folding. The GroEL-GroES system forms a nano-cage that allows encapsulation of the non-native substrate proteins and provides a physical environment optimized to promote and accelerate protein folding. GroES binds to the apical surface of the GroEL ring, thereby capping the opening of the GroEL channel. The chain is Co-chaperonin GroES from Desulfosudis oleivorans (strain DSM 6200 / JCM 39069 / Hxd3) (Desulfococcus oleovorans).